Consider the following 329-residue polypeptide: Glycerol-3-phosphate dehydrogenase [NAD(P)+] (329 aa).

NADPH-binding residues include Trp11, Arg31, and Lys105. Sn-glycerol 3-phosphate is bound by residues Lys105, Gly135, and Thr137. Ala139 contacts NADPH. Residues Lys190, Asp243, Ser253, Arg254, and Asn255 each coordinate sn-glycerol 3-phosphate. Catalysis depends on Lys190, which acts as the Proton acceptor. Arg254 contacts NADPH. Residues Val277 and Glu279 each contribute to the NADPH site.

This sequence belongs to the NAD-dependent glycerol-3-phosphate dehydrogenase family.

The protein localises to the cytoplasm. It carries out the reaction sn-glycerol 3-phosphate + NAD(+) = dihydroxyacetone phosphate + NADH + H(+). The catalysed reaction is sn-glycerol 3-phosphate + NADP(+) = dihydroxyacetone phosphate + NADPH + H(+). It functions in the pathway membrane lipid metabolism; glycerophospholipid metabolism. Its function is as follows. Catalyzes the reduction of the glycolytic intermediate dihydroxyacetone phosphate (DHAP) to sn-glycerol 3-phosphate (G3P), the key precursor for phospholipid synthesis. This Maridesulfovibrio salexigens (strain ATCC 14822 / DSM 2638 / NCIMB 8403 / VKM B-1763) (Desulfovibrio salexigens) protein is Glycerol-3-phosphate dehydrogenase [NAD(P)+].